An 83-amino-acid polypeptide reads, in one-letter code: Weak neurotoxin WNTX33 (83 aa).

Positions 1-21 (MKTLLLTLVVVTIVCLDLGYS) are cleaved as a signal peptide. 4 cysteine pairs are disulfide-bonded: Cys-24–Cys-45, Cys-38–Cys-62, Cys-64–Cys-75, and Cys-76–Cys-81.

It belongs to the three-finger toxin family. Short-chain subfamily. As to expression, expressed by the venom gland.

The protein resides in the secreted. This chain is Weak neurotoxin WNTX33, found in Ophiophagus hannah (King cobra).